A 439-amino-acid polypeptide reads, in one-letter code: Glutamyl-tRNA reductase (439 aa).

Substrate contacts are provided by residues 48–51 (TCNR), S107, 112–114 (EPQ), and Q118. C49 serves as the catalytic Nucleophile. 187–192 (GAGEMA) is a binding site for NADP(+).

This sequence belongs to the glutamyl-tRNA reductase family. As to quaternary structure, homodimer.

The catalysed reaction is (S)-4-amino-5-oxopentanoate + tRNA(Glu) + NADP(+) = L-glutamyl-tRNA(Glu) + NADPH + H(+). It functions in the pathway porphyrin-containing compound metabolism; protoporphyrin-IX biosynthesis; 5-aminolevulinate from L-glutamyl-tRNA(Glu): step 1/2. Functionally, catalyzes the NADPH-dependent reduction of glutamyl-tRNA(Glu) to glutamate 1-semialdehyde (GSA). This is Glutamyl-tRNA reductase from Maridesulfovibrio salexigens (strain ATCC 14822 / DSM 2638 / NCIMB 8403 / VKM B-1763) (Desulfovibrio salexigens).